We begin with the raw amino-acid sequence, 158 residues long: uncharacterized protein (158 aa).

This is an uncharacterized protein from Archaeoglobus fulgidus (strain ATCC 49558 / DSM 4304 / JCM 9628 / NBRC 100126 / VC-16).